The chain runs to 482 residues: Class E basic helix-loop-helix protein 41 (482 aa).

Lys-31 participates in a covalent cross-link: Glycyl lysine isopeptide (Lys-Gly) (interchain with G-Cter in SUMO2). Positions 44-99 constitute a bHLH domain; that stretch reads TYKLPHRLIEKKRRDRINECIAQLKDLLPEHLKLTTLGHLEKAVVLELTLKHLKAL. A necessary for interaction with RXRA and repressor activity towards RXRA region spans residues 67 to 71; the sequence is LKDLL. Lys-121 participates in a covalent cross-link: Glycyl lysine isopeptide (Lys-Gly) (interchain with G-Cter in SUMO2). Residues 131–166 enclose the Orange domain; it reads FHSGFQTCAKEVLQYLSRFESWTPREPRCVQLINHL. Residue Lys-210 forms a Glycyl lysine isopeptide (Lys-Gly) (interchain with G-Cter in SUMO2) linkage. 2 disordered regions span residues 228-298 and 438-482; these read AELA…GGAA and VAPL…KEAP. Positions 246–256 are enriched in basic and acidic residues; sequence AEARPDREKGK. Lys-266 participates in a covalent cross-link: Glycyl lysine isopeptide (Lys-Gly) (interchain with G-Cter in SUMO2). Over residues 285–297 the composition is skewed to gly residues; sequence RGGGSGGGPGGGA.

As to quaternary structure, homodimer. Heterodimer with BHLHE40/DEC1. Interacts with CIART and BMAL1. Interacts with RXRA. Interacts with NR0B2 and HNF1A. In terms of tissue distribution, highly expressed in skeletal muscle and brain, moderately expressed in pancreas and heart, weakly expressed in placenta, lung, liver and kidney.

The protein localises to the nucleus. Functionally, transcriptional repressor involved in the regulation of the circadian rhythm by negatively regulating the activity of the clock genes and clock-controlled genes. Acts as the negative limb of a novel autoregulatory feedback loop (DEC loop) which differs from the one formed by the PER and CRY transcriptional repressors (PER/CRY loop). Both these loops are interlocked as it represses the expression of PER1 and in turn is repressed by PER1/2 and CRY1/2. Represses the activity of the circadian transcriptional activator: CLOCK-BMAL1 heterodimer by competing for the binding to E-box elements (5'-CACGTG-3') found within the promoters of its target genes. Negatively regulates its own expression and the expression of DBP and BHLHE41/DEC2. Acts as a corepressor of RXR and the RXR-LXR heterodimers and represses the ligand-induced RXRA/B/G, NR1H3/LXRA, NR1H4 and VDR transactivation activity. Inhibits HNF1A-mediated transactivation of CYP1A2, CYP2E1 AND CYP3A11. The sequence is that of Class E basic helix-loop-helix protein 41 from Homo sapiens (Human).